A 286-amino-acid chain; its full sequence is ATP synthase gamma chain (286 aa).

Belongs to the ATPase gamma chain family. In terms of assembly, F-type ATPases have 2 components, CF(1) - the catalytic core - and CF(0) - the membrane proton channel. CF(1) has five subunits: alpha(3), beta(3), gamma(1), delta(1), epsilon(1). CF(0) has three main subunits: a, b and c.

The protein localises to the cell membrane. In terms of biological role, produces ATP from ADP in the presence of a proton gradient across the membrane. The gamma chain is believed to be important in regulating ATPase activity and the flow of protons through the CF(0) complex. In Bacillus anthracis (strain A0248), this protein is ATP synthase gamma chain.